A 278-amino-acid polypeptide reads, in one-letter code: Large ribosomal subunit protein uL2 (278 aa).

Disordered regions lie at residues 29-57 and 224-278; these read PEKSLVRPLHSKGGRNNAGRVTVRHQGGG and VAMN…NKKR. The span at 258 to 278 shows a compositional bias: basic residues; that stretch reads RSPKKASNKYIVRRRKTNKKR.

The protein belongs to the universal ribosomal protein uL2 family. Part of the 50S ribosomal subunit. Forms a bridge to the 30S subunit in the 70S ribosome.

In terms of biological role, one of the primary rRNA binding proteins. Required for association of the 30S and 50S subunits to form the 70S ribosome, for tRNA binding and peptide bond formation. It has been suggested to have peptidyltransferase activity; this is somewhat controversial. Makes several contacts with the 16S rRNA in the 70S ribosome. The protein is Large ribosomal subunit protein uL2 of Streptomyces griseus subsp. griseus (strain JCM 4626 / CBS 651.72 / NBRC 13350 / KCC S-0626 / ISP 5235).